Consider the following 417-residue polypeptide: MPKNVHIIGAGISGLSAAVQLSNAGLPVHVYEATQQAGGRCRSFFDSATNLTIDNGNHLVLSGNQYVRNYARAIGTESGLVGPTSAKFPFVDISTVQRWQVDLGGGRLPTWVFHKARRVPDTRLWDYLKLAPILWAGADELVGNTIPCNGTLYRRLVRPLLLAALNCDPPEGSAGLAGAIVRETLLAGGEACRPLVARDGLSAVLVEPAVKLLERRGATVRLSHKLRKLAKSAEIISELDFGDDKIAVGPDDAVILAVPPRAAATLLPGLKTPTEFRAVVNAHFRFDPPVGADPILGVVGGLVEWLFAYPQRLSVTISNGDRLLDIPREEVVRVIWRDVCEAGGISGELPPWQIVCERRATFQATPEQNALRPGPVTGCKNLFLAGDWTATGLPATIEGSVRSGNRAADLALSETNT.

This sequence belongs to the HpnE family.

It catalyses the reaction squalene + FAD + H2O + H(+) = hydroxysqualene + FADH2. The protein operates within secondary metabolite biosynthesis; hopanoid biosynthesis. In terms of biological role, involved in the biosynthesis of the hopanoid precursor squalene (SQ) from farnesyl diphosphate (FPP). Catalyzes the third (last) step, the reduction of hydroxysqualene (HSQ) to SQ. This chain is Hydroxysqualene dehydroxylase, found in Sinorhizobium fredii (strain NBRC 101917 / NGR234).